The following is a 496-amino-acid chain: Catalase isozyme 3 (496 aa).

The disordered stretch occupies residues 1 to 25 (MTMDPTKFRPSSSHDTTVTTTNAGA). Over residues 9 to 23 (RPSSSHDTTVTTTNA) the composition is skewed to polar residues. Active-site residues include histidine 67 and asparagine 140. Position 351 (tyrosine 351) interacts with heme. Residues 402–422 (PLRQAAPPTPLPPRPVAGRRE) are disordered.

It belongs to the catalase family. Homotetramer. Requires heme as cofactor. In terms of tissue distribution, leaf mesophyll cells, pericarp, seedling roots and the coleoptile.

It is found in the mitochondrion. It catalyses the reaction 2 H2O2 = O2 + 2 H2O. Its function is as follows. Occurs in almost all aerobically respiring organisms and serves to protect cells from the toxic effects of hydrogen peroxide. Its levels are highest in the light period and are lowest in the dark period, hence it may be important for scavenging hydrogen peroxide at night, rather than during the day. The protein is Catalase isozyme 3 (CAT3) of Zea mays (Maize).